We begin with the raw amino-acid sequence, 324 residues long: Glyoxylate/hydroxypyruvate reductase B (324 aa).

Active-site residues include Arg237 and Glu266. The active-site Proton donor is the His285.

This sequence belongs to the D-isomer specific 2-hydroxyacid dehydrogenase family. GhrB subfamily. In terms of assembly, homodimer.

It localises to the cytoplasm. It carries out the reaction glycolate + NADP(+) = glyoxylate + NADPH + H(+). It catalyses the reaction (R)-glycerate + NAD(+) = 3-hydroxypyruvate + NADH + H(+). The enzyme catalyses (R)-glycerate + NADP(+) = 3-hydroxypyruvate + NADPH + H(+). Its function is as follows. Catalyzes the NADPH-dependent reduction of glyoxylate and hydroxypyruvate into glycolate and glycerate, respectively. This chain is Glyoxylate/hydroxypyruvate reductase B, found in Shigella boydii serotype 4 (strain Sb227).